Here is an 875-residue protein sequence, read N- to C-terminus: Alanine--tRNA ligase (875 aa).

His564, His568, Cys666, and His670 together coordinate Zn(2+).

Belongs to the class-II aminoacyl-tRNA synthetase family. As to quaternary structure, homotetramer. Zn(2+) serves as cofactor.

The protein localises to the cytoplasm. The catalysed reaction is tRNA(Ala) + L-alanine + ATP = L-alanyl-tRNA(Ala) + AMP + diphosphate. Functionally, catalyzes the attachment of alanine to tRNA(Ala) in a two-step reaction: alanine is first activated by ATP to form Ala-AMP and then transferred to the acceptor end of tRNA(Ala). Also edits incorrectly charged Ser-tRNA(Ala) and Gly-tRNA(Ala) via its editing domain. The protein is Alanine--tRNA ligase of Yersinia pestis bv. Antiqua (strain Angola).